Here is a 465-residue protein sequence, read N- to C-terminus: Antithrombin-III (465 aa).

The signal sequence occupies residues 1–32 (MISNGIGTVTAGKRSICLLPLLLIGLWGCVTC). Intrachain disulfides connect Cys-41–Cys-161 and Cys-54–Cys-128. Residue Thr-64 is modified to Phosphothreonine. Ser-69 bears the Phosphoserine mark. Trp-82 contributes to the heparin binding site. A glycan (N-linked (GlcNAc...) asparagine) is linked at Asn-129. Heparin is bound at residue Arg-162. The N-linked (GlcNAc...) asparagine glycan is linked to Asn-168. Arg-178 lines the heparin pocket. 2 N-linked (GlcNAc...) asparagine glycosylation sites follow: Asn-188 and Asn-225. Cys-280 and Cys-463 are disulfide-bonded.

It belongs to the serpin family. Forms protease inhibiting heterodimer with TMPRSS7. In terms of processing, phosphorylated by FAM20C in the extracellular medium. As to expression, plasma.

The protein resides in the secreted. It localises to the extracellular space. Its function is as follows. Most important serine protease inhibitor in plasma that regulates the blood coagulation cascade. AT-III inhibits thrombin, matriptase-3/TMPRSS7, as well as factors IXa, Xa and XIa. Its inhibitory activity is greatly enhanced in the presence of heparin. This chain is Antithrombin-III (SERPINC1), found in Bos taurus (Bovine).